The following is an 830-amino-acid chain: DNA helicase MCM8 (830 aa).

Residues 394 to 601 form the MCM domain; it reads LFRIIVNSLC…DHDHLLSEHV (208 aa). Residue 446 to 453 coordinates ATP; it reads GDPGLGKS.

Belongs to the MCM family. In terms of assembly, component of the MCM8-MCM9 complex, which forms a hexamer composed of MCM8 and MCM9.

It localises to the nucleus. It carries out the reaction ATP + H2O = ADP + phosphate + H(+). Component of the MCM8-MCM9 complex, a complex involved in homologous recombination repair following DNA interstrand cross-links and plays a key role during gametogenesis. The MCM8-MCM9 complex probably acts as a hexameric helicase required to process aberrant forks into homologous recombination substrates and to orchestrate homologous recombination with resection, fork stabilization and fork restart. The chain is DNA helicase MCM8 (MCM8) from Gallus gallus (Chicken).